The sequence spans 226 residues: 2-C-methyl-D-erythritol 4-phosphate cytidylyltransferase (226 aa).

The protein belongs to the IspD/TarI cytidylyltransferase family. IspD subfamily.

The enzyme catalyses 2-C-methyl-D-erythritol 4-phosphate + CTP + H(+) = 4-CDP-2-C-methyl-D-erythritol + diphosphate. It participates in isoprenoid biosynthesis; isopentenyl diphosphate biosynthesis via DXP pathway; isopentenyl diphosphate from 1-deoxy-D-xylulose 5-phosphate: step 2/6. Its function is as follows. Catalyzes the formation of 4-diphosphocytidyl-2-C-methyl-D-erythritol from CTP and 2-C-methyl-D-erythritol 4-phosphate (MEP). In Microcystis aeruginosa (strain NIES-843 / IAM M-2473), this protein is 2-C-methyl-D-erythritol 4-phosphate cytidylyltransferase.